The primary structure comprises 188 residues: dTTP/UTP pyrophosphatase (188 aa).

Catalysis depends on Asp-70, which acts as the Proton acceptor.

The protein belongs to the Maf family. YhdE subfamily. A divalent metal cation is required as a cofactor.

It is found in the cytoplasm. The enzyme catalyses dTTP + H2O = dTMP + diphosphate + H(+). The catalysed reaction is UTP + H2O = UMP + diphosphate + H(+). Functionally, nucleoside triphosphate pyrophosphatase that hydrolyzes dTTP and UTP. May have a dual role in cell division arrest and in preventing the incorporation of modified nucleotides into cellular nucleic acids. This Clostridium beijerinckii (strain ATCC 51743 / NCIMB 8052) (Clostridium acetobutylicum) protein is dTTP/UTP pyrophosphatase.